The primary structure comprises 98 residues: MARRRKPLHRQRPEPPSWALRRVEAGPDGHEYEVRPVAAARAVKTYRCPGCDHEIRSGTAHVVVWPTDLPQAGVDDRRHWHTPCWANRATRGPTRKWT.

Over residues 1–10 the composition is skewed to basic residues; sequence MARRRKPLHR. Residues 1–21 are disordered; it reads MARRRKPLHRQRPEPPSWALR.

This is an uncharacterized protein from Mycobacterium bovis (strain ATCC BAA-935 / AF2122/97).